We begin with the raw amino-acid sequence, 290 residues long: ATP synthase gamma chain (290 aa).

This sequence belongs to the ATPase gamma chain family. F-type ATPases have 2 components, CF(1) - the catalytic core - and CF(0) - the membrane proton channel. CF(1) has five subunits: alpha(3), beta(3), gamma(1), delta(1), epsilon(1). CF(0) has three main subunits: a, b and c.

It is found in the cell membrane. In terms of biological role, produces ATP from ADP in the presence of a proton gradient across the membrane. The gamma chain is believed to be important in regulating ATPase activity and the flow of protons through the CF(0) complex. In Buchnera aphidicola subsp. Schlechtendalia chinensis, this protein is ATP synthase gamma chain.